The primary structure comprises 281 residues: Transcription factor bHLH79 (281 aa).

The segment at 47–167 is disordered; it reads FTRSEHSGNK…GQATDRHSLA (121 aa). Composition is skewed to basic and acidic residues over residues 77 to 88 and 138 to 152; these read KTRDLNSEDDSS and TEQK…DYIH. One can recognise a bHLH domain in the interval 159–209; that stretch reads QATDRHSLAERARREKISEKMTALQDIIPGCNKIIGKALVLDEIINYIQSL.

In terms of assembly, homodimer.

Its subcellular location is the nucleus. This Arabidopsis thaliana (Mouse-ear cress) protein is Transcription factor bHLH79 (BHLH79).